Reading from the N-terminus, the 389-residue chain is Galactokinase (389 aa).

34–37 (EHTD) contributes to the substrate binding site. ATP-binding positions include S68 and 125 to 131 (GSGLSSS). Mg(2+)-binding residues include S131 and E163. The active-site Proton acceptor is the D175. Y225 provides a ligand contact to substrate.

This sequence belongs to the GHMP kinase family. GalK subfamily.

It is found in the cytoplasm. The catalysed reaction is alpha-D-galactose + ATP = alpha-D-galactose 1-phosphate + ADP + H(+). It participates in carbohydrate metabolism; galactose metabolism. In terms of biological role, catalyzes the transfer of the gamma-phosphate of ATP to D-galactose to form alpha-D-galactose-1-phosphate (Gal-1-P). The chain is Galactokinase from Clostridium acetobutylicum (strain ATCC 824 / DSM 792 / JCM 1419 / IAM 19013 / LMG 5710 / NBRC 13948 / NRRL B-527 / VKM B-1787 / 2291 / W).